The primary structure comprises 452 residues: tRNA modification GTPase MnmE (452 aa).

Positions 21, 82, and 121 each coordinate (6S)-5-formyl-5,6,7,8-tetrahydrofolate. The region spanning 217–373 (GINTTIIGKP…LENKIIEMFN (157 aa)) is the TrmE-type G domain. Residue Asn-227 coordinates K(+). Residues 227–232 (NVGKSS), 246–252 (TDIPGTT), and 271–274 (DTAG) contribute to the GTP site. Ser-231 serves as a coordination point for Mg(2+). Positions 246, 248, and 251 each coordinate K(+). Thr-252 contributes to the Mg(2+) binding site. Lys-452 is a binding site for (6S)-5-formyl-5,6,7,8-tetrahydrofolate.

It belongs to the TRAFAC class TrmE-Era-EngA-EngB-Septin-like GTPase superfamily. TrmE GTPase family. As to quaternary structure, homodimer. Heterotetramer of two MnmE and two MnmG subunits. K(+) is required as a cofactor.

Its subcellular location is the cytoplasm. Exhibits a very high intrinsic GTPase hydrolysis rate. Involved in the addition of a carboxymethylaminomethyl (cmnm) group at the wobble position (U34) of certain tRNAs, forming tRNA-cmnm(5)s(2)U34. The polypeptide is tRNA modification GTPase MnmE (Finegoldia magna (strain ATCC 29328 / DSM 20472 / WAL 2508) (Peptostreptococcus magnus)).